The chain runs to 1090 residues: MPRNPRFCFFLFLLFHSSLFFSIPCFSIDEQGLALLSWKSQLNISGDALSSWKASESNPCQWVGIKCNERGQVSEIQLQVMDFQGPLPATNLRQIKSLTLLSLTSVNLTGSIPKELGDLSELEVLDLADNSLSGEIPVDIFKLKKLKILSLNTNNLEGVIPSELGNLVNLIELTLFDNKLAGEIPRTIGELKNLEIFRAGGNKNLRGELPWEIGNCESLVTLGLAETSLSGRLPASIGNLKKVQTIALYTSLLSGPIPDEIGNCTELQNLYLYQNSISGSIPVSMGRLKKLQSLLLWQNNLVGKIPTELGTCPELFLVDLSENLLTGNIPRSFGNLPNLQELQLSVNQLSGTIPEELANCTKLTHLEIDNNQISGEIPPLIGKLTSLTMFFAWQNQLTGIIPESLSQCQELQAIDLSYNNLSGSIPNGIFEIRNLTKLLLLSNYLSGFIPPDIGNCTNLYRLRLNGNRLAGNIPAEIGNLKNLNFIDISENRLIGNIPPEISGCTSLEFVDLHSNGLTGGLPGTLPKSLQFIDLSDNSLTGSLPTGIGSLTELTKLNLAKNRFSGEIPREISSCRSLQLLNLGDNGFTGEIPNELGRIPSLAISLNLSCNHFTGEIPSRFSSLTNLGTLDVSHNKLAGNLNVLADLQNLVSLNISFNEFSGELPNTLFFRKLPLSVLESNKGLFISTRPENGIQTRHRSAVKVTMSILVAASVVLVLMAVYTLVKAQRITGKQEELDSWEVTLYQKLDFSIDDIVKNLTSANVIGTGSSGVVYRVTIPSGETLAVKKMWSKEENRAFNSEINTLGSIRHRNIIRLLGWCSNRNLKLLFYDYLPNGSLSSLLHGAGKGSGGADWEARYDVVLGVAHALAYLHHDCLPPILHGDVKAMNVLLGSRFESYLADFGLAKIVSGEGVTDGDSSKLSNRPPLAGSYGYMAPEHASMQHITEKSDVYSYGVVLLEVLTGKHPLDPDLPGGAHLVQWVRDHLAGKKDPREILDPRLRGRADPIMHEMLQTLAVSFLCVSNKASDRPMMKDIVAMLKEIRQFDMDRSESDMIKGGKCEKWQPQPLPPEKIVSTPRGSSNCSFAYSDESV.

A signal peptide spans 1–20 (MPRNPRFCFFLFLLFHSSLF). The Extracellular segment spans residues 21-702 (FSIPCFSIDE…IQTRHRSAVK (682 aa)). An LRR 1 repeat occupies 36–59 (LSWKSQLNISGDALSSWKASESNP). An N-linked (GlcNAc...) asparagine glycan is attached at Asn43. Residues Cys60 and Cys67 are joined by a disulfide bond. 4 LRR repeats span residues 95–119 (IKSLTLLSLTSVNLTGSIPKELGDL), 120–143 (SELEVLDLADNSLSGEIPVDIFKL), 145–166 (KLKILSLNTNNLEGVIPSELGN), and 168–191 (VNLIELTLFDNKLAGEIPRTIGEL). N-linked (GlcNAc...) asparagine glycosylation is present at Asn107. 4 consecutive short sequence motifs (small peptide recognition) follow at residues 176–177 (FD), 198–201 (RAGG), 221–226 (TLGLAE), and Tyr249. LRR repeat units follow at residues 216–240 (CESLVTLGLAETSLSGRLPASIGNL), 242–264 (KVQTIALYTSLLSGPIPDEIGNC), 265–288 (TELQNLYLYQNSISGSIPVSMGRL), 289–312 (KKLQSLLLWQNNLVGKIPTELGTC), 314–335 (ELFLVDLSENLLTGNIPRSFGN), 336–360 (LPNLQELQLSVNQLSGTIPEELANC), and 362–386 (KLTHLEIDNNQISGEIPPLIGKLTS). The N-linked (GlcNAc...) asparagine glycan is linked to Asn263. The CLE45 peptide binding signature appears at 269 to 273 (NLYLY). The Small peptide recognition signature appears at 271–273 (YLY). 2 short sequence motifs (small peptide recognition) span residues 319 to 322 (DLSE) and 341 to 343 (ELQ). Residue Asn359 is glycosylated (N-linked (GlcNAc...) asparagine). 2 short sequence motifs (small peptide recognition) span residues 389-393 (MFFAW) and 415-418 (DLSY). LRR repeat units lie at residues 408–432 (CQELQAIDLSYNNLSGSIPNGIFEI), 434–456 (NLTKLLLLSNYLSGFIPPDIGNC), 457–480 (TNLYRLRLNGNRLAGNIPAEIGNL), 481–504 (KNLNFIDISENRLIGNIPPEISGC), 506–526 (SLEFVDLHSNGLTGGLPGTLP), 527–550 (KSLQFIDLSDNSLTGSLPTGIGSL), 551–574 (TELTKLNLAKNRFSGEIPREISSC), 576–598 (SLQLLNLGDNGFTGEIPNELGRI), 600–622 (SLAISLNLSCNHFTGEIPSRFSS), 623–646 (LTNLGTLDVSHNKLAGNLNVLADL), and 647–670 (QNLVSLNISFNEFSGELPNTLFFR). Asn420 and Asn434 each carry an N-linked (GlcNAc...) asparagine glycan. Residues 437 to 441 (KLLLL) carry the Small peptide recognition motif. Asn455 carries an N-linked (GlcNAc...) asparagine glycan. A Small peptide recognition motif is present at residues 461–463 (RLR). The N-linked (GlcNAc...) asparagine glycan is linked to Asn606. An N-linked (GlcNAc...) asparagine glycan is attached at Asn653. The helical transmembrane segment at 703 to 723 (VTMSILVAASVVLVLMAVYTL) threads the bilayer. Residues 724-1090 (VKAQRITGKQ…CSFAYSDESV (367 aa)) lie on the Cytoplasmic side of the membrane. Positions 758 to 1040 (LTSANVIGTG…KDIVAMLKEI (283 aa)) constitute a Protein kinase domain. Residues 764–772 (IGTGSSGVV) and Lys786 each bind ATP. Residues Tyr829 and Tyr869 each carry the phosphotyrosine modification. Asp882 functions as the Proton acceptor in the catalytic mechanism. A Phosphotyrosine modification is found at Tyr932. One copy of the LRR 24 repeat lies at 1037-1060 (LKEIRQFDMDRSESDMIKGGKCEK). The tract at residues 1054 to 1079 (KGGKCEKWQPQPLPPEKIVSTPRGSS) is disordered.

It belongs to the protein kinase superfamily. Ser/Thr protein kinase family. Self-interacts. Interacts with RGF1; this interaction triggers its phosphorylation and ubiquitination and the formation of heterodimers with SERK1. Autophosphorylated. Post-translationally, phosphorylated and ubiquitinated upon interaction with RGF1, thus leading to activation a subsequent degradation. As to expression, expressed in floers, pollen grains and stipules. Present in roots.

It is found in the cell membrane. It catalyses the reaction L-seryl-[protein] + ATP = O-phospho-L-seryl-[protein] + ADP + H(+). The enzyme catalyses L-threonyl-[protein] + ATP = O-phospho-L-threonyl-[protein] + ADP + H(+). Receptor with a serine/threonine-protein kinase activity. Together with SKM1, LRR-rich receptor-like kinase (LRR-RLK) required for male fertility by the perception of CLE43 and CLE45 peptides and the transduction of their promoting action in pollen tubes, especially under relatively high temperature (at 30 degrees Celsius), thus conferring tolerance against high temperature probably through the maintenance of mitochondrial activity. Seems to not be involved in the perception of CLE45 peptide in roots. Together with RGI1, RGI2, RGI3, RGI4 and RGI5, acts as receptor of RGF1, a peptide hormone that maintains the postembryonic root stem cell niche by regulating the expression levels and patterns of the transcription factor PLETHORA (PLT). Links RGF1 signal with its downstream components. In Arabidopsis thaliana (Mouse-ear cress), this protein is Leucine-rich repeat receptor-like serine/threonine-protein kinase RGI4.